Consider the following 315-residue polypeptide: ATP synthase gamma chain (315 aa).

This sequence belongs to the ATPase gamma chain family. As to quaternary structure, F-type ATPases have 2 components, CF(1) - the catalytic core - and CF(0) - the membrane proton channel. CF(1) has five subunits: alpha(3), beta(3), gamma(1), delta(1), epsilon(1). CF(0) has three main subunits: a, b and c.

The protein resides in the cellular thylakoid membrane. Its function is as follows. Produces ATP from ADP in the presence of a proton gradient across the membrane. The gamma chain is believed to be important in regulating ATPase activity and the flow of protons through the CF(0) complex. The sequence is that of ATP synthase gamma chain from Synechococcus sp. (strain PCC 6716).